The following is a 194-amino-acid chain: Fe/S biogenesis protein NfuA (194 aa).

[4Fe-4S] cluster is bound by residues Cys-151 and Cys-154.

This sequence belongs to the NfuA family. Homodimer. The cofactor is [4Fe-4S] cluster.

Functionally, involved in iron-sulfur cluster biogenesis. Binds a 4Fe-4S cluster, can transfer this cluster to apoproteins, and thereby intervenes in the maturation of Fe/S proteins. Could also act as a scaffold/chaperone for damaged Fe/S proteins. The polypeptide is Fe/S biogenesis protein NfuA (Aliivibrio salmonicida (strain LFI1238) (Vibrio salmonicida (strain LFI1238))).